Here is a 2035-residue protein sequence, read N- to C-terminus: MFSKKPHGDVKKSTQKVLDTKKDALTRLKHLRIVIENADSIDLKQFFDQHFSHIYYVFFENFVTIEASLKQKGHKSQREELDAILFIFEKILQLLPERIHQRWQFHSIGLILKKLLHTGNSLKIRREGVRLFLLWLQALQDNCSKEQLWMFSCLIPGFSAPQSEYGPRTLDNLINPPLNLQETQVTIEEVTPLVPPQSGDKGQEDLTSYFLEALLKYIVIQVKSLEWKNKENQERGFSFLFSHFKKFYLPYIFPNLCKENSLYHPVLDIPQVRPKPHYVMVKKDAETNETIYCTKEPFIQARVIVIRWLVSFWLEPKPHSGPNIPGMEGEVLPKNIQRAAASLVSREESKNDTVDKADKTAEPEQSHSNTSTLTEREPSSSSLCSIDEEHLTDIEIVRRVFSSKRSNVNFVTEIFRQAFLLPICEAAAMRKVVKVYQEWIQQEGKPLFMQEPEETVITSSDIPCSENVTDHDISIEDGEKREEENGTNISEHVRNSTWTKNGSYQEAFHVSEEATEQNIQAGTQAVLQVFIINSSNIFLLEPANEIKNLLDEHTDMCKRILNIYRYMVVQVSMDKKTWEQMLLVLLRVTESVLKMSSQAFLQFQGKKNMTLAGRLAGPLFQTLIVAWIKANLNVYISRELWDDLLSVLSSLTYWEELATEWSLTMETLTKVLARNLYSLDLSDLPLDKLSEQKQKKHKGKGVGHEFQKVSVDKSFSRGWSRDQPGQAPMRQRSATTTGSPGTEKARSIVRQKTVDIDDSQILPRSTRVRHFSQSEDTGNEVFGALHEEQPLPRSSSTSDILEPFTVERAKVNKEDTSPKLPPLNSETGGSSANVPDLMDEFIAERLRSGNASTMTRRGSSPGSLEIPKDLPDILNKQNQMRPVDDPGVPSEWTSPASAGSSDLMSSDSHSDSFSAFQCEGRKFDNFGFGTDIGIPSSADVDSGSGHHQSTEEQEVASLTTLHLDSETSSLNQQAFSAEVATVTGSESASPVHSALGSRSQTPSPSTLNIDHMEQKDLQLDEKLHHSVLQTPDDLEISEFPSECCSVMAGGTLTGWHADVATVMWRRMLGILGDVNAIMDPEIHAQVFDYLCELWQNLAKIRDNLGISADNLTSPSPPVLIPPLRILTPWLFKATMLTDKYKQGKLHAYKLICNTMKRRQDVSPNRDFLTHFYNIMHCGLLHIDQDIVNTIIKHCSPQFFSLGLPGATMLIMDFIIAAGRVASSAFLNAPRVEAQVLLGSLVCFPNLYCELPALHPSTPDIAVSQFTDVKELIIKTVLSSARDEPSGPARCVALCSLGIWICEELVHESHHPQIKEALNVICVSLKFTNKTVAHVACNMLHMLVHYAPRLQTYQPDSPLKIIQILIATITHLLPSTEASSYEMDKRLVVSLLLCLLDWIMALPLKTLLQSVHSTGAENEKTEKSVLNCIYKVLHGCVYGAQSFSHPKYFPISLSDLASVDYDPFMHLESLREPEPLHSPDSERSSKLQPVTEVKTQMQQGLISIAARTVITHLVNHLGHYPMSGGPAMLTSQVCENHDNHYSESTELSPELFDSPNIQFFVLNNTTLVSCIQIRSEESVPGGGLAAGLVSANSNVRIIVRDLSGKYSWDSAILYGPPIVSGLPEPTSFILSMSYQEKPEEPPTSNECLEDITVKDGLSLQLRRFRETVPTWSTIREEEDVLDELLQYLGTTSPECLQRTGISLNVPAPQPVCISEKQENDVINAILKQYTEEKEFVEKHFNDLNMKASEQDEPTPQKPQSAFYYCRLLLSILGMNSWDKRRSFHLLKKNEKLLRELRNLDSRQCRETHKIAVFYVAEGQEDKYSILTNIGGSQAYEDFVAGLGWEVNLTNHCGFMGGLQKNKSTGLTTPYFATSTVEVIFHVSTRMPSESDDSLTKKLRHLGNDEVHIVWSEHTRDYRRGIIPTEFGDVLIVIYPMKNHMFSIQIMKKPEVPFFGPLFDGAIVNGKVLPIMVRSTAINASRALKSLIPLYQNLYEERARYLQTIVQHHLEPTTFEDFAAQVFSPAPYHHFPADADH.

Positions 343-384 (LVSREESKNDTVDKADKTAEPEQSHSNTSTLTEREPSSSSLC) are disordered. A compositionally biased stretch (basic and acidic residues) spans 345–365 (SREESKNDTVDKADKTAEPEQ). Residues 366 to 384 (SHSNTSTLTEREPSSSSLC) are compositionally biased toward polar residues. Phosphoserine is present on residues serine 710 and serine 720. The disordered stretch occupies residues 714 to 754 (SFSRGWSRDQPGQAPMRQRSATTTGSPGTEKARSIVRQKTV). Threonine 753 bears the Phosphothreonine mark. Serine 772 bears the Phosphoserine mark. Residue threonine 777 is modified to Phosphothreonine. Serine 796 is modified (phosphoserine). Residues 807–817 (ERAKVNKEDTS) are compositionally biased toward basic and acidic residues. Disordered regions lie at residues 807–834 (ERAK…SANV) and 848–911 (SGNA…SHSD). 2 stretches are compositionally biased toward polar residues: residues 824–833 (NSETGGSSAN) and 849–862 (GNAS…SSPG). A phosphoserine mark is found at serine 859, serine 860, and serine 863. A compositionally biased stretch (low complexity) spans 894 to 911 (SPASAGSSDLMSSDSHSD). Serine 985, serine 989, serine 993, and serine 999 each carry phosphoserine. Positions 986 to 1008 (ESASPVHSALGSRSQTPSPSTLN) are disordered. Threonine 1001 carries the post-translational modification Phosphothreonine. 2 positions are modified to phosphoserine: serine 1003 and serine 1477. Residues 1326-2034 (FTNKTVAHVA…PYHHFPADAD (709 aa)) are minimal domain that binds to TCF3/E12. The stretch at 1713–1746 (SEKQENDVINAILKQYTEEKEFVEKHFNDLNMKA) forms a coiled coil. Residues 1795 to 2003 (LRNLDSRQCR…EERARYLQTI (209 aa)) enclose the Rap-GAP domain.

Component of the heterodimeric RalGAP1 complex with RALGAPB. Heterodimerization is required for activity. Interacts with the HLH region of TCF3/isoform E12. Highly expressed in brain, thymus and testis with lower levels in lung and spleen and barely detectable in heart or liver (at protein level).

It is found in the cytoplasm. It localises to the nucleus. Its function is as follows. Catalytic subunit of the heterodimeric RalGAP1 complex which acts as a GTPase activator for the Ras-like small GTPases RALA and RALB. In Rattus norvegicus (Rat), this protein is Ral GTPase-activating protein subunit alpha-1 (Ralgapa1).